The sequence spans 292 residues: Ribosomal protein L11 methyltransferase (292 aa).

4 residues coordinate S-adenosyl-L-methionine: threonine 144, glycine 165, aspartate 187, and asparagine 229.

The protein belongs to the methyltransferase superfamily. PrmA family.

It localises to the cytoplasm. The catalysed reaction is L-lysyl-[protein] + 3 S-adenosyl-L-methionine = N(6),N(6),N(6)-trimethyl-L-lysyl-[protein] + 3 S-adenosyl-L-homocysteine + 3 H(+). In terms of biological role, methylates ribosomal protein L11. The sequence is that of Ribosomal protein L11 methyltransferase from Pseudomonas savastanoi pv. phaseolicola (strain 1448A / Race 6) (Pseudomonas syringae pv. phaseolicola (strain 1448A / Race 6)).